Consider the following 290-residue polypeptide: Phosphoribulokinase 1 (290 aa).

12 to 20 (GSSGAGTST) contributes to the ATP binding site.

It belongs to the phosphoribulokinase family. Homooctamer.

It catalyses the reaction D-ribulose 5-phosphate + ATP = D-ribulose 1,5-bisphosphate + ADP + H(+). It functions in the pathway carbohydrate biosynthesis; Calvin cycle. Activated by NADH and inhibited by phosphoenolpyruvate. The chain is Phosphoribulokinase 1 (prkA) from Cereibacter sphaeroides (Rhodobacter sphaeroides).